Consider the following 3674-residue polypeptide: MLFSGASTAKPKKDEKKDKKSDRDPKNELQEWVFVRWANHLLGTERLTDYKSLQDGSNAIFVYQAIIGQTMAVLGNPSDDWPNVLQNIGDSKTNPQEVMEGQQKAVLSAWWQLVQFFWKNNAPVQLREEKLSEAIKQWCIEVMKSYEEIDVYDFTSSFRDGHAFNYLIHSYDRKLINLTKTAEMSAIDRIENAFAVAEKTWNVPRLLNPKDLHSDQLDSHSVLCYLMSLYLAMISTSKIETELEAQQIQQQKVAALLASHKMLSSQPSTSSSSALQIPPQTPPTAHHQAMLDRGKSFEQSAEGEVRSRKSSSSSQKSGKSKKARREEQLAEFKSCIEQVLTWLLEAEDELTTLTQMPRVELASVRSQFSDFESFMSSLTDSQDTVGRVLLRGQMLSNKSESEEEKESIGANLHLVNTRWEALREQAMQEQAVLQQQIHLLQQSELDTISQWLDAAELEIESFGPLAADSSQALRQIELHTKFQQKLNDFQETIDKLESFVAVVDEENDASVATLEDALSAVSVRWGHVCEWAEKRATKLDGLADLLDKTNEVFENLSGWLAERENELMTGLKSAHHLENEEQVAQQVRRLQKTEEQLEQEHASFVRLSQLSCELVGRLDDSNGAAANAVRLSLDSITQRWDNLVARIEEHGKTLVKSGKADVKQVQESQNEQKEQPASSEGLSTDTEGEEQKNQLVDKFLLHISKLSHELEPLQDWSEKFEVSRKKDDIRKMMNTCQEKLIQIKEQEARVNRLQLELEHLHVAKLNARQLKRANDAFEQFAKGWARIVTKISEAMNVLTGQEAGGNGNGSEEAAVAAKIEQWIEAVDKVINELSQLPVNERRSRIDKLEQQLQVQDKNVGFIEKDLLKKAILKKGLEIAGKRLAALKVEEKPVEKEEQLVLSNSEEPEAEKHVTFVQETTEKPAPLQEPTSEAQLLEELDGPWSRVGDVVAIEHDLLRAKRAVDTARNSQMSNETVEKAETRKAEMEEKRRVTMSARSKFRMAEETLEEIERNLDRLQVSDLEIADLVRGLEQEAAKLGERVSQRKEAERTAEKILSMDDDEISQEIVIKTKDSTEKLIKRWNQLELDLEENLRKAKRDQDVFIQKRLREGEEALNEIKTAIEGKRESLDAETAAENLDHLESSLDNISSLFGEIGSLPMDDNSREKLSKLAKAKDQITARANEALAALTRTVSECEDFEKQIMLFQNWSARIGFLLQARKSADISAFDIPHEYHEDLGNEAELIPKLSREFEEWTVKLNEMNSTATEKDDSARMREQLNHANETMAELKRKFNEFKRPKGFEEKLEKVITTLSNVEMGLDDTTGIDGSECGGALMEVRALVRMLDGAQEKWKDLAENREQLVKDRVLDEETSKETLQKLQYAKTKSKELYERSSTCIERLEDCVEMYQRLKMESDEIERFLEEMEGKLDQYAASDRPEEAEIVNELISEWNRNEAAMKNAEHLQRQLNERAIKIPDDVLSLKRLRADALKNRLNSWCRTIQEMSEDDESALLEIDELHQNLEKELKLVSDKEPSKIAEKLRFLRADRDRLSSRTRKLAAKNPRLAATSSDVLAGLNQKWKELEVKASAEKAPAPELRDARLSSPSEQPFDKRVQELCDLFENLEAQLDFNGSPVSMVTEYQKRVENLDEYLDEYRPALDDTIEEGRKIAETGRLELQTHSAIEKLDELTNRIEQVEVELDKHRDKVPSLVEQHEQLKKDIDSFLLVLDVFTDRNLDDVDIAKSTRKELAERDSHIVSLTSRATAIHCALPGKGPQLHDVTLDKLRDRIEKLEARLSATEKKPVETVKSTIPDRPEVPEEPEKSSPDRTSRSSLQLAMEAYGTATEDDSVISEAVTVGQKSVDQVDPVEQLEPVEPVEPKLEVKQLKDEATEEEEKRTIILPDETEKVIETIPAARPSAGPSEGTVAEVSTSEILKARPAQESIERTVREVPVDEYEETANISSGDELQDHKISSAVPDSESEIASMFEVLDSIEDSHTNFEEFPFDYLDSADDDLKKTLLKLESCEKTLAKNEMTINIAQAENARERITMLRQMALQRKDKLPKFNEEWNAMQELIQLADALVDEAERYESDQIPQMDRKSAPNVLGELRKRVANAEGPVIDLVKKLSQLVPRMQEDSPKSQDIRQKVYGIEDRFRRVGQAEGAAISKALSSALTEPELKLELDEVVRWCEMAEKEAAQNVNSLDGDGLEKLDGRLAQFTKELQERKDDMVQLEMAKNMIIPSLKGDAHHDLRRNFSDTAKRVAMVRDELSDAHKWVATSRDTCDTFWADIDSLEQLARDVVRRANGIRMAVIYTPSRENVEGVLRDVQRLKMSIGDVKKRVQTANLPPAIKLAGKNAKRVVQVLTETATTIADCHDIPTYLIDEMNDSGGDTTESRSTVVEMTSVHTKQSSSSSSNKTPSAGGESDDAHTLNGDDEQSEEDQKIYSRESSSTLPRGVSSLGSTGSSGVLDPVAVQLTHTRHWLHDVERDASITVDLAQWQPARELWQSIQGIIDEIRLRSVHVTGAHDASPNRQVRQQAAQLLTEMRRTIENCEKRCLILNQISDIARQNEASRNEMELWLKSASDVIGERRVEELSEEVVRQELQVLERVVEQLTERKDKMAEINSQANKIVDTYTKDEAHNLSHLLSRLNMSWTKFNDNIRIRRAVLEASLRSRRDFHSALSEFEKWLSRQEDNCSKLSADTSNHQAIKDTSKRKNWTQSFKTLNAELNAHEDVMKSVEKMGKMLAESLESGNEKVELLKRVGETTRRWTALRKTTNEIGERLEKAEQEWEKLSDGLADLLSWVEAKKQAIMDEQPTGGSLSAVMQQASFVKGLQREIESKTANYKSTVEEAHSFLMQHDLRPKLHSPHVLDDDYEKEELANLEQRRRGLEINANCERLKKNWAELGIEVESWDKLVQHAMQRLQELERNLAECQLHLTSSENEIETMKAVEKIHLEDLKIAREETDQISKRIDEVRLFVDDVNDAAARLLAEDLKLDEHAKGQIEHVNKRYSTLKRAIRIRQAAVRNAASDFGPTSEHFLNQSVTLPWQRAISKSNLLPYYIEQTSEKTQWEHPVWVEIVKELSQFNRVKFLAYRTAMKLRALQKRLCLDLVDLTLLEKAFVRLKGLSAEECPGLEGMVCALLPMYEALHAKYPNQVQSVSLAVDICINFLLNLFDQSRDGIMRVLSFKIAMIVFSNIPLEEKYRYLFKLVSQDGHATQKQIALLLYDLIHIPRLVGESAAFGGTNVEPSVRSCFETVRLAPTISEGAFIDWVKKEPQSIVWLAVMHRLVISESTKHASKCNVCKMFPIIGIRYRCLTCFNCDLCQNCFFSQRTAKSHRTNHPMQEYCEKTTSSDDARDFAKMIRNKFRASKRQKGYLPIDVAEEGIPLTCPPAKVTNQATEQMNADTSQMTAHLAKLSAEHGGGAEHMEPVQSPLQIINQVEQLQRDEMDQMLHRLQFENKQLRKELEWKRGAASTMEIDRSSKRHQERHQSESRGGTLPLRNGRSVVSLKSTQSQNDVMDEAKALRLHKQRLEHRSRILEQQNEQLEMQLQRLKKVIDAQKQQAPLSTNSLLRGSHHQPWSPERARSGSASTLDRGLIVSSRHQEQAEAAGGGAEDSSDEAGGAGGGPRGSSVGQMQNLMTACDDLGKAMESLVVSVVYDSDDEEND.

Residues 1–25 form a disordered region; sequence MLFSGASTAKPKKDEKKDKKSDRDP. Basic and acidic residues predominate over residues 11-25; sequence PKKDEKKDKKSDRDP. The segment at 30–39 is actin-binding; it reads QEWVFVRWAN. Positions 129–234 constitute a Calponin-homology (CH) domain; sequence EKLSEAIKQW…YLMSLYLAMI (106 aa). Residues 265-325 form a disordered region; that stretch reads SQPSTSSSSA…KSGKSKKARR (61 aa). Spectrin repeat units follow at residues 327 to 435, 436 to 541, and 612 to 656; these read EQLA…VLQQ, QIHL…KLDG, and CELV…TLVK. Basic and acidic residues predominate over residues 655-674; the sequence is VKSGKADVKQVQESQNEQKE. Disordered stretches follow at residues 655-689, 968-991, 1587-1606, 1796-1833, and 2387-2466; these read VKSGKADVKQVQESQNEQKEQPASSEGLSTDTEGE, NSQMSNETVEKAETRKAEMEEKRR, ASAEKAPAPELRDARLSSPS, LSATEKKPVETVKSTIPDRPEVPEEPEKSSPDRTSRSS, and MNDS…GSTG. The segment covering 675 to 685 has biased composition (polar residues); sequence QPASSEGLSTD. Residues 975-991 are compositionally biased toward basic and acidic residues; it reads TVEKAETRKAEMEEKRR. Basic and acidic residues predominate over residues 1796–1830; it reads LSATEKKPVETVKSTIPDRPEVPEEPEKSSPDRTS. A compositionally biased stretch (polar residues) spans 2391 to 2411; it reads GGDTTESRSTVVEMTSVHTKQ. Spectrin repeat units follow at residues 2576–2673, 2725–2789, 2792–2905, and 2926–3032; these read RNEM…VLEA, FKTL…RLEK, QEWE…RLKK, and QRLQ…AVRN. A WW domain is found at 3047-3081; that stretch reads QSVTLPWQRAISKSNLLPYYIEQTSEKTQWEHPVW. The segment at 3301-3357 adopts a ZZ-type zinc-finger fold; it reads KHASKCNVCKMFPIIGIRYRCLTCFNCDLCQNCFFSQRTAKSHRTNHPMQEYCEKTT. Cys3306, Cys3309, Cys3321, Cys3324, Cys3330, Cys3333, His3343, and His3347 together coordinate Zn(2+). Disordered regions lie at residues 3481–3522 and 3568–3645; these read STME…TQSQ and KQQA…QMQN. Over residues 3568–3579 the composition is skewed to polar residues; that stretch reads KQQAPLSTNSLL.

As to quaternary structure, component of the dystrophin glycoprotein complex (DGC). Interacts with dyb-1 and stn-1 to form the DGC. Interacts with stn-2. Expressed in body wall, head, pharyngeal and vulval muscles, from late embryogenesis to adulthood (at protein level).

The protein resides in the cell membrane. Its subcellular location is the sarcolemma. It localises to the cytoplasm. The protein localises to the cytoskeleton. In terms of biological role, plays a role in cholinergic transmission and as a functional partner of dystrobrevin (dyb-1), necessary for muscle maintenance. Required for neuronal positioning. May play a role in the localization of slo-1 near dense bodies in the muscle. The protein is Dystrophin-1 (dys-1) of Caenorhabditis elegans.